An 84-amino-acid polypeptide reads, in one-letter code: Small ribosomal subunit protein uS15 (84 aa).

Belongs to the universal ribosomal protein uS15 family. In terms of assembly, part of the 30S ribosomal subunit. Forms a bridge to the 50S subunit in the 70S ribosome, contacting the 23S rRNA.

Functionally, one of the primary rRNA binding proteins, it binds directly to 16S rRNA where it helps nucleate assembly of the platform of the 30S subunit by binding and bridging several RNA helices of the 16S rRNA. Its function is as follows. Forms an intersubunit bridge (bridge B4) with the 23S rRNA of the 50S subunit in the ribosome. This is Small ribosomal subunit protein uS15 from Thermosipho africanus (strain TCF52B).